Reading from the N-terminus, the 357-residue chain is 4-hydroxy-3-methylbut-2-en-1-yl diphosphate synthase (flavodoxin) (357 aa).

4 residues coordinate [4Fe-4S] cluster: cysteine 265, cysteine 268, cysteine 300, and glutamate 307.

It belongs to the IspG family. Homodimer. [4Fe-4S] cluster is required as a cofactor.

The enzyme catalyses (2E)-4-hydroxy-3-methylbut-2-enyl diphosphate + oxidized [flavodoxin] + H2O + 2 H(+) = 2-C-methyl-D-erythritol 2,4-cyclic diphosphate + reduced [flavodoxin]. The protein operates within isoprenoid biosynthesis; isopentenyl diphosphate biosynthesis via DXP pathway; isopentenyl diphosphate from 1-deoxy-D-xylulose 5-phosphate: step 5/6. Converts 2C-methyl-D-erythritol 2,4-cyclodiphosphate (ME-2,4cPP) into 1-hydroxy-2-methyl-2-(E)-butenyl 4-diphosphate. The sequence is that of 4-hydroxy-3-methylbut-2-en-1-yl diphosphate synthase (flavodoxin) from Aquifex aeolicus (strain VF5).